The chain runs to 227 residues: Chaperone protein FocC (227 aa).

An N-terminal signal peptide occupies residues 1 to 21 (MRIWAVLASFLVFFYIPQSYA).

It belongs to the periplasmic pilus chaperone family.

Its subcellular location is the periplasm. Its function is as follows. Involved in the biogenesis of the F1C fimbriae. This chain is Chaperone protein FocC (focC), found in Escherichia coli O6:H1 (strain CFT073 / ATCC 700928 / UPEC).